We begin with the raw amino-acid sequence, 897 residues long: 4-hydroxyphenylacetate decarboxylase glycyl radical subunit (897 aa).

Residues 35–770 (ESTQKLMDIY…VTLATADGRL (736 aa)) form the PFL domain. 4-hydroxyphenylacetate contacts are provided by serine 344 and cysteine 503. The Cysteine radical intermediate role is filled by cysteine 503. Glutamate 505 serves as the catalytic Proton donor. Residues histidine 536 and glutamate 637 each contribute to the 4-hydroxyphenylacetate site. A Glycine radical domain is found at 778 to 897 (GSVSAAAGTD…EVIYRTEYDK (120 aa)). At glycine 873 the chain carries Glycine radical.

It belongs to the glycyl radical enzyme (GRE) family. HPAD subfamily. In terms of assembly, heterooctamer consisting of 4 large (HpdB) subunits and 4 small (HpdC) subunits, arranged as a tetramer of heterodimers. Also forms a catalytically inactive homodimer. Requires the activating protein CsdA to generate the key active site glycyl radical that is involved in catalysis. Post-translationally, phosphorylated on serine. Phosphorylation may trigger the formation of the active heterooctamers and thereby regulates enzyme activity.

The catalysed reaction is 4-hydroxyphenylacetate + H(+) = 4-methylphenol + CO2. It carries out the reaction 3,4-dihydroxyphenylacetate + H(+) = 4-methylcatechol + CO2. Functionally, glycyl radical subunit of the HPA decarboxylase that decarboxylates phenylacetates with a hydroxyl group in the p-position. Active toward 4-hydroxyphenylacetate and 3,4-dihydroxyphenylacetate, forming 4-methylphenol and 4-methylcatechol, respectively. Is likely involved in the catabolism of aromatic amino acids such as tyrosine fermentation. 4-methylphenol (p-cresol) formation provides metabolic toxicity, which allows an active suppression of other microbes and may provide growth advantages for the producers in highly competitive environments. The large subunit is the catalytic subunit that binds the substrate. The chain is 4-hydroxyphenylacetate decarboxylase glycyl radical subunit from Clostridium scatologenes.